The sequence spans 185 residues: Photosystem I assembly protein Ycf4 (185 aa).

The next 2 membrane-spanning stretches (helical) occupy residues 24–44 (YLIG…SISS) and 66–86 (IIMG…WYLV).

The protein belongs to the Ycf4 family.

The protein localises to the cellular thylakoid membrane. Seems to be required for the assembly of the photosystem I complex. In Prochlorococcus marinus (strain MIT 9515), this protein is Photosystem I assembly protein Ycf4.